Here is a 147-residue protein sequence, read N- to C-terminus: GLSAEQKTALKDSWKILAANGETMVKNSAAMFGLLFEKYPDTKKHFKTFDGDHFAAMKATGMGKAHGMSVFSGLGALVSSVDDGECVLGLAKKLSRNHTARGVTANDFKLMRSIFGEFLDKATGGKATESMKSAWDALLGVLIENHQ.

One can recognise a Globin domain in the interval 1–147; sequence GLSAEQKTAL…LLGVLIENHQ (147 aa). Heme b is bound by residues His-66 and His-98.

The protein belongs to the globin family. In terms of assembly, homodimer.

The protein is Globin of Tritia mutabilis (Sea snail).